The sequence spans 226 residues: Ribonuclease 3 (226 aa).

Positions 7–129 (LARLSRTLGY…IIGAVYLDAN (123 aa)) constitute an RNase III domain. Glutamate 42 is a binding site for Mg(2+). The active site involves aspartate 46. 2 residues coordinate Mg(2+): aspartate 115 and glutamate 118. Glutamate 118 is an active-site residue. Positions 156–226 (DPKTILQEYL…AAQILELINK (71 aa)) constitute a DRBM domain.

The protein belongs to the ribonuclease III family. As to quaternary structure, homodimer. The cofactor is Mg(2+).

Its subcellular location is the cytoplasm. The enzyme catalyses Endonucleolytic cleavage to 5'-phosphomonoester.. Functionally, digests double-stranded RNA. Involved in the processing of primary rRNA transcript to yield the immediate precursors to the large and small rRNAs (23S and 16S). Processes some mRNAs, and tRNAs when they are encoded in the rRNA operon. Processes pre-crRNA and tracrRNA of type II CRISPR loci if present in the organism. The polypeptide is Ribonuclease 3 (Shewanella denitrificans (strain OS217 / ATCC BAA-1090 / DSM 15013)).